A 522-amino-acid chain; its full sequence is Sensory neuron membrane protein 1 (522 aa).

Residues 1-11 (MKLPKHLKFAA) are Cytoplasmic-facing. A helical transmembrane segment spans residues 12–32 (GAGGAFLFGILFGWVMFPAIL). Topologically, residues 33–455 (KGQLKKEMAL…KFQLFYPKKA (423 aa)) are extracellular. Residues asparagine 67 and asparagine 229 are each glycosylated (N-linked (GlcNAc...) asparagine). 3 disulfide bridges follow: cysteine 268–cysteine 333, cysteine 297–cysteine 350, and cysteine 335–cysteine 339. Asparagine 438 carries an N-linked (GlcNAc...) asparagine glycan. A helical membrane pass occupies residues 456-476 (VGVIKWLLVTFGGFGLIGCTI). Residues 477 to 522 (YHYKDRIMSFASSPGSAAVTKVKPEEVEQKDVSVIGQPQEPAKINM) lie on the Cytoplasmic side of the membrane.

It belongs to the CD36 family.

Its subcellular location is the cell membrane. In terms of biological role, plays an olfactory role that is not restricted to pheromone sensitivity. This Plutella xylostella (Diamondback moth) protein is Sensory neuron membrane protein 1.